A 658-amino-acid chain; its full sequence is Endoglin (658 aa).

The N-terminal stretch at 1–25 (MDRGTLPLAVALLLASCSLSPTSLA) is a signal peptide. The segment at 26 to 46 (ETVHCDLQPVGPERGEVTYTT) is OR1, N-terminal part. The segment at 26-337 (ETVHCDLQPV…SSCGGRLQTS (312 aa)) is required for interaction with GDF2. At 26–586 (ETVHCDLQPV…PDLSGCTSKG (561 aa)) the chain is on the extracellular side. 7 disulfides stabilise this stretch: C30–C207, C53–C182, C242–C330, C350–C382, C363–C442, C394–C412, and C493–C549. Positions 47–199 (SQVSKGCVAQ…MGRTLEWRPR (153 aa)) are OR2. N-linked (GlcNAc...) asparagine glycans are attached at residues N88, N102, N121, and N134. The tract at residues 200–330 (TPALVRGCHL…SIVSLHASSC (131 aa)) is OR1, C-terminal part. Residues 270–282 (QIWTTGEYSFKIF) are essential for interaction with GDF2. N307 carries an N-linked (GlcNAc...) asparagine glycan. Residues 363 to 533 (CADDAMTLVL…PEGDPRFSFL (171 aa)) form the ZP domain. The Cell attachment site signature appears at 399–401 (RGD). Residues 587 to 611 (LVLPAVLGITFGAFLIGALLTAALW) form a helical membrane-spanning segment. At 612–658 (YIYSHTRSPSKREPVVAVAAPASSESSSTNHSIGSTQSTPCSTSSMA) the chain is on the cytoplasmic side. Residues 626–639 (VVAVAAPASSESSS) show a composition bias toward low complexity. A disordered region spans residues 626-658 (VVAVAAPASSESSSTNHSIGSTQSTPCSTSSMA). The segment covering 640-658 (TNHSIGSTQSTPCSTSSMA) has biased composition (polar residues). Residues S646 and S649 each carry the phosphoserine; by TGFBR1 modification.

In terms of assembly, homodimer; disulfide-linked. Forms a heteromeric complex with the signaling receptors for transforming growth factor-beta: TGFBR1 and/or TGFBR2. It is able to bind TGFB1 and TGFB2 with high affinity, but not TGFB3. Interacts with GDF2, forming a heterotetramer with a 2:2 stoichiometry. Interacts with ACVRL1. Can form a heteromeric complex with GDF2 and ACVRL1. Interacts with BMP10. Interacts with DYNLT4. Interacts with ARRB2. As to expression, detected on umbilical veil endothelial cells. Detected in placenta (at protein level). Detected on endothelial cells.

The protein localises to the cell membrane. In terms of biological role, vascular endothelium glycoprotein that plays an important role in the regulation of angiogenesis. Required for normal structure and integrity of adult vasculature. Regulates the migration of vascular endothelial cells. Required for normal extraembryonic angiogenesis and for embryonic heart development. May regulate endothelial cell shape changes in response to blood flow, which drive vascular remodeling and establishment of normal vascular morphology during angiogenesis. May play a critical role in the binding of endothelial cells to integrins and/or other RGD receptors. Acts as a TGF-beta coreceptor and is involved in the TGF-beta/BMP signaling cascade that ultimately leads to the activation of SMAD transcription factors. Required for GDF2/BMP9 signaling through SMAD1 in endothelial cells and modulates TGFB1 signaling through SMAD3. The protein is Endoglin (ENG) of Homo sapiens (Human).